Here is a 252-residue protein sequence, read N- to C-terminus: D-aminoacyl-tRNA deacylase (252 aa).

It belongs to the DtdA deacylase family. In terms of assembly, monomer. Zn(2+) serves as cofactor.

The catalysed reaction is a D-aminoacyl-tRNA + H2O = a tRNA + a D-alpha-amino acid + H(+). It catalyses the reaction glycyl-tRNA(Ala) + H2O = tRNA(Ala) + glycine + H(+). Functionally, D-aminoacyl-tRNA deacylase with broad substrate specificity. By recycling D-aminoacyl-tRNA to D-amino acids and free tRNA molecules, this enzyme counteracts the toxicity associated with the formation of D-aminoacyl-tRNA entities in vivo. This is D-aminoacyl-tRNA deacylase from Pyrobaculum arsenaticum (strain DSM 13514 / JCM 11321 / PZ6).